Consider the following 648-residue polypeptide: Biosynthetic arginine decarboxylase (648 aa).

Lys-109 is subject to N6-(pyridoxal phosphate)lysine. 291-301 lines the substrate pocket; the sequence is LDVGGGLGVDY.

Belongs to the Orn/Lys/Arg decarboxylase class-II family. SpeA subfamily. It depends on Mg(2+) as a cofactor. Requires pyridoxal 5'-phosphate as cofactor.

The catalysed reaction is L-arginine + H(+) = agmatine + CO2. The protein operates within amine and polyamine biosynthesis; agmatine biosynthesis; agmatine from L-arginine: step 1/1. Functionally, catalyzes the biosynthesis of agmatine from arginine. The sequence is that of Biosynthetic arginine decarboxylase from Prochlorococcus marinus (strain MIT 9303).